A 261-amino-acid chain; its full sequence is Carbonic anhydrase 1 (261 aa).

At alanine 2 the chain carries N-acetylalanine. In terms of domain architecture, Alpha-carbonic anhydrase spans 4-261; that stretch reads SDWGYDSPNG…LKGRTVRAFF (258 aa). The Proton donor/acceptor role is filled by histidine 65. Zn(2+) is bound by residues histidine 95, histidine 97, and histidine 120. Substrate-binding positions include threonine 200 and 200-201; that span reads TH.

Belongs to the alpha-carbonic anhydrase family. Zn(2+) serves as cofactor.

Its subcellular location is the cytoplasm. It catalyses the reaction hydrogencarbonate + H(+) = CO2 + H2O. The catalysed reaction is urea = cyanamide + H2O. With respect to regulation, inhibited by acetazolamide. Its function is as follows. Catalyzes the reversible hydration of carbon dioxide. Can hydrate cyanamide to urea. This chain is Carbonic anhydrase 1 (CA1), found in Equus caballus (Horse).